Here is a 1025-residue protein sequence, read N- to C-terminus: MMQPTPAPSSAPGSPQRTQAEPEMETPSYPQPPQNVGTAPFSVLVKLFEKLATERKQERRRKLLDAWFRHWRREKGFDLYPVLRLLLPQKDRDRAVYGLKEKNLAKTYIKLIPLGMRDPDAIRLLNWKKPTERDKSSGDFPQVLCEVVSKRSSVIEGTLTIDELNEILDDIAKNMGKSDVQSKILRRIYNNSTADEQRWIIRIILKDMNISVKETTVFAVFHPDAQDLYNTCSDLKKVAWELWDPSRRLNAKDKEIQIFHAFAPMLCKRPTRKIEETVKAMGGSKFIIEEKLDGERMQLHKRGNEYFYCSRKGKDYTYLYGKHIGAGSLTPFIDSAFDSRIDDIILDGEMLVWDPVSERNLPFGTLKTAALDRSKKENNPRPCFKVFDLLYLNGMSLLDKTVKFRKNNLRHCIKPIPGRIEFVEEYQGETANDIRKRMEQVMENRGEGLVIKHPKAKYILNGRNTDWIKVKPEYMDNMGETVDVLVVAGNYGSGKRGGGVSTLICAVMDDRRPDSDDEPKYSSFVRIGTGLSFADYVWVRSKPWKVWDPKNPPEFLQTAKKGQEDKGDVYLEPEDSFILKVKAAEITPSDQYHMGFTMRFPRALAIRDDLSIADCMTATEVFESLKSERKRKMEDDAGITTKKRKTTVKKVALLPEYSGPNLKKVAVKTDIFNGMKFVVFSDPKSRTGEADKKELMKTIHANGGTCSQIVNKNSEAIVIYGGSITPYDLKLVIDKGIHDVIKPSWITDSVTLGEPAPFKKKYFFHATEERKYADEYNEDDGEEEGAVPSADEQERDVKSGTVEPGSETEDEDEEQAPEIKEEQDGELHEWLKVDDRKSPALPAHDEEDSVTEDDSDNADVADEEEPDLDDWFQVKGETEDEGAGALATASRHRETTPDVDGDVKMGESEEAMDYDPDVIFKHLCFYLDSPANAQRHGMATRPKYEAAITKSFEEVEKLIKDNGGKIVDLDEPKLTHVVLDKRDDSRRVELMKRTSKPRRRHLVLSDYIEACIDEGTLLDEEEFAP.

Positions 1 to 36 (MMQPTPAPSSAPGSPQRTQAEPEMETPSYPQPPQNV) are disordered. Residues E289, K291, L292, R296, E349, F387, E447, K452, K469, and K471 each coordinate ATP. The active-site N6-AMP-lysine intermediate is K291. Mg(2+) is bound at residue E349. Residue E447 coordinates Mg(2+). Residues 667-763 (VKTDIFNGMK…EPAPFKKKYF (97 aa)) form the BRCT 1 domain. Positions 773–904 (ADEYNEDDGE…TTPDVDGDVK (132 aa)) are disordered. 2 stretches are compositionally biased toward acidic residues: residues 775 to 785 (EYNEDDGEEEG) and 806 to 816 (SETEDEDEEQA). The span at 817-838 (PEIKEEQDGELHEWLKVDDRKS) shows a compositional bias: basic and acidic residues. Residues 845-870 (DEEDSVTEDDSDNADVADEEEPDLDD) are compositionally biased toward acidic residues. Residues 891-904 (RHRETTPDVDGDVK) show a composition bias toward basic and acidic residues. Residues 915–1025 (DPDVIFKHLC…TLLDEEEFAP (111 aa)) enclose the BRCT 2 domain.

It belongs to the ATP-dependent DNA ligase family. Mg(2+) serves as cofactor.

The protein localises to the nucleus. It catalyses the reaction ATP + (deoxyribonucleotide)n-3'-hydroxyl + 5'-phospho-(deoxyribonucleotide)m = (deoxyribonucleotide)n+m + AMP + diphosphate.. DNA ligase involved in DNA non-homologous end joining (NHEJ); required for double-strand break (DSB) repair. The polypeptide is DNA ligase 4 (LIG4) (Coprinopsis cinerea (Inky cap fungus)).